A 716-amino-acid polypeptide reads, in one-letter code: Translation initiation factor IF-2 (716 aa).

The segment at 50–137 (FKKSAKPAGN…KPKKELPEKI (88 aa)) is disordered. Residues 92–101 (NNVQNTQFNN) are compositionally biased toward low complexity. Residues 102–118 (KNKKKNNNNKKNKRGKN) are compositionally biased toward basic residues. Residues 125 to 137 (KQFKPKKELPEKI) are compositionally biased toward basic and acidic residues. The tr-type G domain maps to 217-386 (IRPPVVTIMG…LLVSEVEELK (170 aa)). Residues 226-233 (GHVDHGKT) are G1. Residue 226 to 233 (GHVDHGKT) coordinates GTP. The segment at 251–255 (GITQH) is G2. Residues 272-275 (DTPG) are G3. GTP contacts are provided by residues 272–276 (DTPGH) and 326–329 (NKID). Residues 326–329 (NKID) are G4. Positions 362 to 364 (SAL) are G5.

The protein belongs to the TRAFAC class translation factor GTPase superfamily. Classic translation factor GTPase family. IF-2 subfamily.

It localises to the cytoplasm. Its function is as follows. One of the essential components for the initiation of protein synthesis. Protects formylmethionyl-tRNA from spontaneous hydrolysis and promotes its binding to the 30S ribosomal subunits. Also involved in the hydrolysis of GTP during the formation of the 70S ribosomal complex. In Bacillus licheniformis (strain ATCC 14580 / DSM 13 / JCM 2505 / CCUG 7422 / NBRC 12200 / NCIMB 9375 / NCTC 10341 / NRRL NRS-1264 / Gibson 46), this protein is Translation initiation factor IF-2.